A 515-amino-acid polypeptide reads, in one-letter code: Proline--tRNA ligase (515 aa).

The protein belongs to the class-II aminoacyl-tRNA synthetase family. ProS type 3 subfamily. In terms of assembly, homodimer.

Its subcellular location is the cytoplasm. The catalysed reaction is tRNA(Pro) + L-proline + ATP = L-prolyl-tRNA(Pro) + AMP + diphosphate. Catalyzes the attachment of proline to tRNA(Pro) in a two-step reaction: proline is first activated by ATP to form Pro-AMP and then transferred to the acceptor end of tRNA(Pro). The protein is Proline--tRNA ligase of Novosphingobium aromaticivorans (strain ATCC 700278 / DSM 12444 / CCUG 56034 / CIP 105152 / NBRC 16084 / F199).